The chain runs to 617 residues: MRRFLTTLMILLVVLVAGLSALVLLVNPNDFRDYMVKQVAARSGYQLQLDGPLRWHVWPQLSILSGRMSLTAQGASQPLVRADNMRLDVALLPLLSHQLSVKQVMLKGAVIQLTPQTEAVRSEDAPVAPRDNTLPDLSDDRGWSFDISSLKVADSVLVFQHEDDEQVTIRNIRLQMEQDPQHRGSFEFSGRVNRDQRDLTISLNGTVDASDYPHDLTAAIEQINWQLQGADLPKQGIQGQGSFQAQWQESHKRLSFNQISLTANDSTLSGQAQVTLTEKPEWQLRLQFPQLNLDNLIPLNETANGENGAAQQGQSQSTLPRPVISSRIDEPAYQGLQGFTADILLQASNVRWRGMNFTDVATQMTNKSGLLEITQLQGKLNGGQVSLPGTLDATSINPRINFQPRLENVEIGTILKAFNYPISLTGKMSLAGDFSGADIDADAFRHNWQGQAHVEMTDTRMEGMNFQQMIQQAVERNGGDVKAAENFDNVTRLDRFTTDLTLKDGVVTLNDMQGQSPVLALTGEGMLNLADQTCDTQFDIRVVGGWNGESKLIDFLKETPVPLRVYGNWQQLNYSLQVDQLLRKHLQDEAKRRLNDWAERNKDSRNGKDVKKLLEKM.

Residues 1 to 3 (MRR) are Cytoplasmic-facing. A helical membrane pass occupies residues 4-24 (FLTTLMILLVVLVAGLSALVL). The Periplasmic portion of the chain corresponds to 25–617 (LVNPNDFRDY…KDVKKLLEKM (593 aa)). The segment covering 302–319 (TANGENGAAQQGQSQSTL) has biased composition (polar residues). The disordered stretch occupies residues 302–321 (TANGENGAAQQGQSQSTLPR).

It belongs to the AsmA family.

The protein resides in the cell inner membrane. Functionally, could be involved in the assembly of outer membrane proteins. May indirectly influence the assembly of outer membrane proteins, potentially by altering outer membrane fluidity. Inhibits the assembly of mutant forms of outer membrane protein F (OmpF). This is Protein AsmA from Escherichia coli (strain K12).